Reading from the N-terminus, the 147-residue chain is Ubiquitin-conjugating enzyme E2 D2 (147 aa).

Residues 1–147 (MALKRIHKEL…AREWTQKYAM (147 aa)) form the UBC core domain. Cys-85 (glycyl thioester intermediate) is an active-site residue.

The protein belongs to the ubiquitin-conjugating enzyme family. Interacts with SCF (SKP1-CUL1-F-box protein) E3 ubiquitin ligase complex. Interacts with CNOT4 (via RING domain). Interacts with E3 ubiquitin-protein ligases CBLC, PJA1 and PJA2. Interacts with PDZRN3. Interacts with PPP1R11. Interacts with E3 ubiquitin-protein ligase PHF7; the interaction inhibits cleavage of PHF7 and promotes association of the complex with the nucleosome core particle.

The catalysed reaction is S-ubiquitinyl-[E1 ubiquitin-activating enzyme]-L-cysteine + [E2 ubiquitin-conjugating enzyme]-L-cysteine = [E1 ubiquitin-activating enzyme]-L-cysteine + S-ubiquitinyl-[E2 ubiquitin-conjugating enzyme]-L-cysteine.. It carries out the reaction S-ubiquitinyl-[E1 ubiquitin-activating enzyme]-L-cysteine + [acceptor protein]-L-lysine = [E1 ubiquitin-activating enzyme]-L-cysteine + N(6)-monoubiquitinyl-[acceptor protein]-L-lysine.. It functions in the pathway protein modification; protein ubiquitination. Accepts ubiquitin from the E1 complex and catalyzes its covalent attachment to other proteins. In vitro catalyzes 'Lys-48'-linked polyubiquitination. Mediates the selective degradation of short-lived and abnormal proteins. Functions in the E6/E6-AP-induced ubiquitination of p53/TP53. Mediates ubiquitination of PEX5 and SQSTM1 and autoubiquitination of STUB1 and TRAF6. Involved in the signal-induced conjugation and subsequent degradation of NFKBIA, FBXW2-mediated GCM1 ubiquitination and degradation, MDM2-dependent degradation of p53/TP53 and the activation of MAVS in the mitochondria by RIGI in response to viral infection. Essential for viral activation of IRF3. The polypeptide is Ubiquitin-conjugating enzyme E2 D2 (UBE2D2) (Bos taurus (Bovine)).